The chain runs to 181 residues: Large ribosomal subunit protein uL5 (181 aa).

It belongs to the universal ribosomal protein uL5 family. As to quaternary structure, part of the 50S ribosomal subunit; contacts the 5S rRNA and probably tRNA. Forms a bridge to the 30S subunit in the 70S ribosome.

Its function is as follows. This is one of the proteins that bind and probably mediate the attachment of the 5S RNA into the large ribosomal subunit, where it forms part of the central protuberance. In the 70S ribosome it contacts protein S13 of the 30S subunit (bridge B1b), connecting the 2 subunits; this bridge is implicated in subunit movement. May contact the P site tRNA; the 5S rRNA and some of its associated proteins might help stabilize positioning of ribosome-bound tRNAs. This chain is Large ribosomal subunit protein uL5, found in Methanococcus maripaludis (strain C7 / ATCC BAA-1331).